We begin with the raw amino-acid sequence, 336 residues long: Eukaryotic translation initiation factor 3 subunit I (336 aa).

WD repeat units lie at residues 8 to 47 (GHERSLTQIKFNRDGDLLFSVSKDKIVCAWWTANGERLGT), 50 to 91 (GHLG…KVWE), 146 to 185 (CNESKATVAGWSYLGKYIIAGHEDGSVSQYDAKTGDQLEN), 190 to 229 (EFDHQINDIQFSADRTYFITASKDKSAKLISSRNLAILKT), and 287 to 326 (GHFGPLNTVGVHPNGTAYASGGEDGYVRVHHFDKPYFDFM).

This sequence belongs to the eIF-3 subunit I family. In terms of assembly, component of the eukaryotic translation initiation factor 3 (eIF-3) complex.

The protein resides in the cytoplasm. Component of the eukaryotic translation initiation factor 3 (eIF-3) complex, which is involved in protein synthesis of a specialized repertoire of mRNAs and, together with other initiation factors, stimulates binding of mRNA and methionyl-tRNAi to the 40S ribosome. The eIF-3 complex specifically targets and initiates translation of a subset of mRNAs involved in cell proliferation. This Aspergillus terreus (strain NIH 2624 / FGSC A1156) protein is Eukaryotic translation initiation factor 3 subunit I (tif34).